A 579-amino-acid chain; its full sequence is MAEQKIISLFDDDACTRYTILIASTIGEMREKKESIIDNTDPEIVKYLSQLLDVFRENFDTWAMAVVNRTGCALDPSTPKDQVEVKKFRQFSETEKSECFIKCLLLLILSLGNYSPYSRNLLYSIAEKLGLSSIVVYKAELITSSMLLDTFQTMESNQEMYELSGTRKMRRRIAMGLAGLAGGALIGLTGGLAAPFVAAGLGTLFAGLGLGTMIGATYLGTLITSAPMITALFGGFGAKMSMQQMGDVSKGLTDFEFIPLSVQSHLPVTIGISGWLGDYNEVDAAWKSLTVGDKSYYWGDIYALKFEVEALVDLGKSLSRILFSAGLGWVKGEVISRTILAPLAAALWPLSLLKVGNILGNSWRIAFNLSIKAGEALANALCVRAQGMRPVTLIGFSLGARTILECLLHLADRGETNLVENVIVMGAPMPTDAKLWLKMRCVVAGRFVNVYSASDYVLQLVYRVNSAQSTAAGLGPVSLDSNTLENVDVGDLVEGHLQYRWLVAKILKERLGYDNISDAEIQSLAVQEEKYESKQRTYYSQKEQEEEIEQEVLFDASSDTELAIQKKEDEVNEVRENKK.

A run of 3 helical transmembrane segments spans residues 173–193, 196–216, and 218–238; these read IAMG…GGLA, FVAA…MIGA, and YLGT…GFGA.

Belongs to the TMCO4 family.

The protein resides in the cytoplasm. It is found in the nucleus membrane. This is an uncharacterized protein from Schizosaccharomyces pombe (strain 972 / ATCC 24843) (Fission yeast).